Reading from the N-terminus, the 128-residue chain is Large ribosomal subunit protein bL12 (128 aa).

This sequence belongs to the bacterial ribosomal protein bL12 family. Homodimer. Part of the ribosomal stalk of the 50S ribosomal subunit. Forms a multimeric L10(L12)X complex, where L10 forms an elongated spine to which 2 to 4 L12 dimers bind in a sequential fashion. Binds GTP-bound translation factors.

Functionally, forms part of the ribosomal stalk which helps the ribosome interact with GTP-bound translation factors. Is thus essential for accurate translation. The chain is Large ribosomal subunit protein bL12 from Corynebacterium aurimucosum (strain ATCC 700975 / DSM 44827 / CIP 107346 / CN-1) (Corynebacterium nigricans).